A 654-amino-acid polypeptide reads, in one-letter code: Bifunctional 3'-phosphoadenosine 5'-phosphosulfate synthase pps-1 (654 aa).

Positions 1–26 are disordered; sequence MLTPRDENNEGDAMPMLKKPRYSSLS. The adenylyl-sulfate kinase stretch occupies residues 1-231; sequence MLTPRDENNE…VLDHLESKGL (231 aa). 66-71 is a binding site for ATP; the sequence is GAGKTT. Adenosine 5'-phosphosulfate-binding positions include 93-96, Phe105, 110-113, 136-137, Lys175, and 190-191; these read DNIR, RQEN, IS, and GF. Residues Cys218, 449–452, 550–554, and Ala592 contribute to the ATP site; these read QLRN and GRDPA. The sulfate adenylyltransferase stretch occupies residues 242-653; it reads VRELFVSDDL…AGYYKSLQNS (412 aa).

The protein in the N-terminal section; belongs to the APS kinase family. It in the C-terminal section; belongs to the sulfate adenylyltransferase family.

The protein resides in the nucleus. The enzyme catalyses sulfate + ATP + H(+) = adenosine 5'-phosphosulfate + diphosphate. It carries out the reaction adenosine 5'-phosphosulfate + ATP = 3'-phosphoadenylyl sulfate + ADP + H(+). Its pathway is sulfur metabolism; sulfate assimilation. Its function is as follows. Bifunctional enzyme with both ATP sulfurylase and APS kinase activity, which mediates two steps in the sulfate activation pathway. The first step is the transfer of a sulfate group to ATP to yield adenosine 5'-phosphosulfate (APS), and the second step is the transfer of a phosphate group from ATP to APS yielding 3'-phosphoadenylylsulfate (PAPS: activated sulfate donor used by sulfotransferase). Required for normal growth and development. Involved in several aspects of both embryonic and postembryonic development, including molting, changes in cell shape, and patterning of epithelial and muscle cells. The chain is Bifunctional 3'-phosphoadenosine 5'-phosphosulfate synthase pps-1 from Caenorhabditis elegans.